The following is a 485-amino-acid chain: D-alanine--D-alanyl carrier protein ligase (485 aa).

144 to 145 (TS) provides a ligand contact to ATP. Asp-189 is a binding site for D-alanine. 284–289 (NTYGPT) serves as a coordination point for ATP. Val-293 is a D-alanine binding site. 2 residues coordinate ATP: Asp-365 and Lys-473. Lys-473 lines the D-alanine pocket.

Belongs to the ATP-dependent AMP-binding enzyme family. DltA subfamily.

The protein resides in the cytoplasm. It catalyses the reaction holo-[D-alanyl-carrier protein] + D-alanine + ATP = D-alanyl-[D-alanyl-carrier protein] + AMP + diphosphate. The protein operates within cell wall biogenesis; lipoteichoic acid biosynthesis. Catalyzes the first step in the D-alanylation of lipoteichoic acid (LTA), the activation of D-alanine and its transfer onto the D-alanyl carrier protein (Dcp) DltC. In an ATP-dependent two-step reaction, forms a high energy D-alanyl-AMP intermediate, followed by transfer of the D-alanyl residue as a thiol ester to the phosphopantheinyl prosthetic group of the Dcp. D-alanylation of LTA plays an important role in modulating the properties of the cell wall in Gram-positive bacteria, influencing the net charge of the cell wall. This is D-alanine--D-alanyl carrier protein ligase from Staphylococcus aureus (strain bovine RF122 / ET3-1).